The sequence spans 846 residues: Choline trimethylamine-lyase (846 aa).

The PFL domain maps to Pro60 to Arg718. Catalysis depends on Cys489, which acts as the Cysteine radical intermediate. Glu491 (proton acceptor) is an active-site residue. The 122-residue stretch at Asp725–Phe846 folds into the Glycine radical domain. Residue Gly821 is modified to Glycine radical.

This sequence belongs to the glycyl radical enzyme (GRE) family. CutC subfamily. Homodimer. Post-translationally, requires the activating protein CutD to generate the key active site glycyl radical on Gly-821 that is involved in catalysis.

The enzyme catalyses choline = trimethylamine + acetaldehyde. It functions in the pathway amine and polyamine metabolism; choline degradation. In terms of biological role, glycine radical enzyme that catalyzes the cleavage of a C-N bond in choline, producing trimethylamine (TMA) and acetaldehyde. Is involved in the anaerobic choline utilization pathway that allows D.alaskensis to grow on choline as a source of carbon and energy. Is strictly specific for choline as substrate. The polypeptide is Choline trimethylamine-lyase (Oleidesulfovibrio alaskensis (strain ATCC BAA-1058 / DSM 17464 / G20) (Desulfovibrio alaskensis)).